The following is a 286-amino-acid chain: MINSTKGYIDQNGLAAKQFVQTKQLSVIRLTFMVAAFGIFFIFLVALTVQQLLSRSTLIDLASDFRTLSTIAVITSFVSLILYFVTAFKLRNPNTSLTWFWALIITDVISYGITLGILLTLATTFSKQVNFEANDIVYAFLGASLVFGSVWGLSALPSQKRRYQQTQTLFHILLWAFVISIVASLLSFILNFTVFASTTNLLDRIIPGLSLIVGGIFSLISVYFVSLQIRNEQDLIKYYESEDYEMARRQSWRSALFFGAWLISSFMNLVYFILRIILITKNFSRV.

Transmembrane regions (helical) follow at residues 30-50 (LTFM…LTVQ), 68-88 (LSTI…VTAF), 99-119 (WFWA…GILL), 136-156 (IVYA…LSAL), 169-189 (LFHI…LSFI), 205-225 (IIPG…VYFV), and 254-274 (SALF…YFIL).

The protein resides in the cell membrane. This is an uncharacterized protein from Mycoplasma genitalium (strain ATCC 33530 / DSM 19775 / NCTC 10195 / G37) (Mycoplasmoides genitalium).